We begin with the raw amino-acid sequence, 375 residues long: Chaperone protein DnaJ (375 aa).

Residues 4–68 form the J domain; that stretch reads DYYEILGVSR…ETRARYDRFG (65 aa). The segment at 134-216 adopts a CR-type zinc-finger fold; the sequence is GGEKEIRIRH…CGGSGRKQET (83 aa). Zn(2+)-binding residues include C147, C150, C164, C167, C190, C193, C204, and C207. CXXCXGXG motif repeat units lie at residues 147–154, 164–171, 190–197, and 204–211; these read CQVCEGSG, CSTCSGSG, CPTCNGSG, and CEACGGSG.

The protein belongs to the DnaJ family. As to quaternary structure, homodimer. It depends on Zn(2+) as a cofactor.

It is found in the cytoplasm. Functionally, participates actively in the response to hyperosmotic and heat shock by preventing the aggregation of stress-denatured proteins and by disaggregating proteins, also in an autonomous, DnaK-independent fashion. Unfolded proteins bind initially to DnaJ; upon interaction with the DnaJ-bound protein, DnaK hydrolyzes its bound ATP, resulting in the formation of a stable complex. GrpE releases ADP from DnaK; ATP binding to DnaK triggers the release of the substrate protein, thus completing the reaction cycle. Several rounds of ATP-dependent interactions between DnaJ, DnaK and GrpE are required for fully efficient folding. Also involved, together with DnaK and GrpE, in the DNA replication of plasmids through activation of initiation proteins. The polypeptide is Chaperone protein DnaJ (Gloeothece citriformis (strain PCC 7424) (Cyanothece sp. (strain PCC 7424))).